The chain runs to 235 residues: Ribose-5-phosphate isomerase A (235 aa).

Residues 32–35, 89–92, and 102–105 contribute to the substrate site; these read TGST, DGAD, and KGGG. Glu111 (proton acceptor) is an active-site residue. A substrate-binding site is contributed by Lys129.

It belongs to the ribose 5-phosphate isomerase family. In terms of assembly, homodimer.

It catalyses the reaction aldehydo-D-ribose 5-phosphate = D-ribulose 5-phosphate. Its pathway is carbohydrate degradation; pentose phosphate pathway; D-ribose 5-phosphate from D-ribulose 5-phosphate (non-oxidative stage): step 1/1. Functionally, catalyzes the reversible conversion of ribose-5-phosphate to ribulose 5-phosphate. In Synechocystis sp. (strain ATCC 27184 / PCC 6803 / Kazusa), this protein is Ribose-5-phosphate isomerase A.